Consider the following 813-residue polypeptide: LPS-assembly protein LptD (813 aa).

The segment at 1–29 (MTEQRRSPNNRALPSPAPTSVPARARRAG) is disordered. The signal sequence occupies residues 1–52 (MTEQRRSPNNRALPSPAPTSVPARARRAGGLHAGALRPLVLAMASLSAGAHA).

The protein belongs to the LptD family. In terms of assembly, component of the lipopolysaccharide transport and assembly complex. Interacts with LptE and LptA.

Its subcellular location is the cell outer membrane. In terms of biological role, together with LptE, is involved in the assembly of lipopolysaccharide (LPS) at the surface of the outer membrane. In Cupriavidus necator (strain ATCC 17699 / DSM 428 / KCTC 22496 / NCIMB 10442 / H16 / Stanier 337) (Ralstonia eutropha), this protein is LPS-assembly protein LptD.